The sequence spans 197 residues: Ribose 1,5-bisphosphate phosphokinase PhnN (197 aa).

Residue 21–28 (GPSGAGKD) coordinates ATP.

Belongs to the ribose 1,5-bisphosphokinase family.

The enzyme catalyses alpha-D-ribose 1,5-bisphosphate + ATP = 5-phospho-alpha-D-ribose 1-diphosphate + ADP. The protein operates within metabolic intermediate biosynthesis; 5-phospho-alpha-D-ribose 1-diphosphate biosynthesis; 5-phospho-alpha-D-ribose 1-diphosphate from D-ribose 5-phosphate (route II): step 3/3. In terms of biological role, catalyzes the phosphorylation of ribose 1,5-bisphosphate to 5-phospho-D-ribosyl alpha-1-diphosphate (PRPP). This Rhizobium etli (strain CIAT 652) protein is Ribose 1,5-bisphosphate phosphokinase PhnN.